The primary structure comprises 438 residues: Beta-1,3-galactosyl-O-glycosyl-glycoprotein beta-1,6-N-acetylglucosaminyltransferase 3 (438 aa).

Residues 1–6 (MVQWKR) are Cytoplasmic-facing. A helical; Signal-anchor for type II membrane protein membrane pass occupies residues 7–26 (LCQLHYLWALGCYMLLATVA). Residues 27 to 438 (LKLSFRLKCD…RYKAIYGTEL (412 aa)) are Lumenal-facing. 4 disulfides stabilise this stretch: C70/C227, C161/C382, C182/C209, and C391/C423. Residue N289 is glycosylated (N-linked (GlcNAc...) asparagine).

It belongs to the glycosyltransferase 14 family. Post-translationally, N-glycosylated. Primarily expressed in mucus-secreting tissues. Expressed in colon, kidney, small intestine, trachea, and stomach, where mucin is produced.

It localises to the golgi apparatus membrane. It catalyses the reaction a 3-O-[beta-D-galactosyl-(1-&gt;3)-N-acetyl-alpha-D-galactosaminyl]-L-seryl-[protein] + UDP-N-acetyl-alpha-D-glucosamine = 3-O-{beta-D-galactosyl-(1-&gt;3)-[N-acetyl-beta-D-glucosaminyl-(1-&gt;6)]-N-acetyl-alpha-D-galactosaminyl}-L-seryl-[protein] + UDP + H(+). It carries out the reaction a 3-O-[beta-D-galactosyl-(1-&gt;3)-N-acetyl-alpha-D-galactosaminyl]-L-threonyl-[protein] + UDP-N-acetyl-alpha-D-glucosamine = a 3-O-{beta-D-galactosyl-(1-&gt;3)-[N-acetyl-beta-D-glucosaminyl-(1-&gt;6)]-N-acetyl-alpha-D-galactosaminyl}-L-threonyl-[protein] + UDP + H(+). The catalysed reaction is a beta-D-Gal-(1-&gt;4)-beta-D-GlcNAc-(1-&gt;3)-beta-D-Gal-(1-&gt;4)-beta-D-GlcNAc derivative + UDP-N-acetyl-alpha-D-glucosamine = a beta-D-Gal-(1-&gt;4)-beta-D-GlcNAc-(1-&gt;3)-[beta-D-GlcNAc-(1-&gt;6)]-beta-D-Gal-(1-&gt;4)-N-acetyl-beta-D-glucosaminyl derivative + UDP + H(+). The enzyme catalyses 3-O-[N-acetyl-beta-D-glucosaminyl-(1-&gt;3)-N-acetyl-alpha-D-galactosaminyl]-L-seryl-[protein] + UDP-N-acetyl-alpha-D-glucosamine = 3-O-[N-acetyl-beta-D-glucosaminyl-(1-&gt;3)-[N-acetyl-beta-D-glucosaminyl-(1-&gt;6)]-N-acetyl-alpha-D-galactosaminyl]-L-seryl-[protein] + UDP + H(+). It catalyses the reaction a 3-O-[N-acetyl-beta-D-glucosaminyl-(1-&gt;3)-N-acetyl-alpha-D-galactosaminyl]-L-threonyl-[protein] + UDP-N-acetyl-alpha-D-glucosamine = 3-O-[N-acetyl-beta-D-glucosaminyl-(1-&gt;3)-[N-acetyl-beta-D-glucosaminyl-(1-&gt;6)]-N-acetyl-alpha-D-galactosaminyl]-L-threonyl-[protein] + UDP + H(+). It participates in protein modification; protein glycosylation. Glycosyltransferase that can synthesize all known mucin beta 6 N-acetylglucosaminides. Mediates core 2 and core 4 O-glycan branching, 2 important steps in mucin-type biosynthesis. Also has I-branching enzyme activity by converting linear into branched poly-N-acetyllactosaminoglycans, leading to introduce the blood group I antigen during embryonic development. In Homo sapiens (Human), this protein is Beta-1,3-galactosyl-O-glycosyl-glycoprotein beta-1,6-N-acetylglucosaminyltransferase 3 (GCNT3).